A 159-amino-acid chain; its full sequence is Ribosome maturation factor RimP (159 aa).

Belongs to the RimP family.

The protein resides in the cytoplasm. Required for maturation of 30S ribosomal subunits. This Geobacter metallireducens (strain ATCC 53774 / DSM 7210 / GS-15) protein is Ribosome maturation factor RimP.